The chain runs to 241 residues: ATP synthase subunit a (241 aa).

6 helical membrane-spanning segments follow: residues 19–39, 80–100, 106–126, 135–155, 177–197, and 203–223; these read AVLI…AKMA, LVAA…IPGF, NINV…YEGI, FAHF…IEIV, LFLW…AYLL, and LLQT…AVAI.

It belongs to the ATPase A chain family. F-type ATPases have 2 components, CF(1) - the catalytic core - and CF(0) - the membrane proton channel. CF(1) has five subunits: alpha(3), beta(3), gamma(1), delta(1), epsilon(1). CF(0) has three main subunits: a(1), b(2) and c(9-12). The alpha and beta chains form an alternating ring which encloses part of the gamma chain. CF(1) is attached to CF(0) by a central stalk formed by the gamma and epsilon chains, while a peripheral stalk is formed by the delta and b chains.

The protein resides in the cell inner membrane. In terms of biological role, key component of the proton channel; it plays a direct role in the translocation of protons across the membrane. The chain is ATP synthase subunit a from Sulfurovum sp. (strain NBC37-1).